The sequence spans 505 residues: COMPASS component BRE2 (505 aa).

One can recognise a B30.2/SPRY domain in the interval 70-295; sequence SANPFFTILG…LKQETTNKEF (226 aa). Position 227 is a phosphoserine (Ser227). Residues 271–290 form a disordered region; the sequence is EPWREDAENGPSRKKLKQET. A DNA-binding site is contributed by Lys318. Positions 398-420 are disordered; the sequence is RDESNDKNTTSAKKKKQQQKKKK. The segment covering 409–420 has biased composition (basic residues); it reads AKKKKQQQKKKK.

Belongs to the cclA family. As to quaternary structure, component of the Set1C/COMPASS complex which consists of SET1(2), BRE2(2), SPP1(2), SDC1(1), SHG1(1), SWD1(1), SWD2(1), and SWD3(1). Interacts directly with SDC1.

Its subcellular location is the nucleus. It localises to the chromosome. The protein resides in the telomere. In terms of biological role, component of the Set1C/COMPASS complex that specifically mono-, di- and trimethylates histone H3 to form H3K4me1/2/3, which subsequently plays a role in telomere length maintenance and transcription elongation regulation. COMPASS recognizes ubiquitinated H2B on one face of the nucleosome which stimulates the methylation of H3 on the opposing face. The chain is COMPASS component BRE2 from Saccharomyces cerevisiae (strain ATCC 204508 / S288c) (Baker's yeast).